Reading from the N-terminus, the 691-residue chain is Elongation factor G 2 (691 aa).

Residues 8 to 287 enclose the tr-type G domain; sequence DRYRNIGIMA…AVVDYLPSPL (280 aa). GTP contacts are provided by residues 17–24, 85–89, and 139–142; these read AHIDAGKT, DTPGH, and NKMD.

This sequence belongs to the TRAFAC class translation factor GTPase superfamily. Classic translation factor GTPase family. EF-G/EF-2 subfamily.

The protein resides in the cytoplasm. Catalyzes the GTP-dependent ribosomal translocation step during translation elongation. During this step, the ribosome changes from the pre-translocational (PRE) to the post-translocational (POST) state as the newly formed A-site-bound peptidyl-tRNA and P-site-bound deacylated tRNA move to the P and E sites, respectively. Catalyzes the coordinated movement of the two tRNA molecules, the mRNA and conformational changes in the ribosome. This is Elongation factor G 2 from Myxococcus xanthus (strain DK1622).